A 170-amino-acid chain; its full sequence is MGFPVGYTEVFLPKLFVQTLSILGFIRTIVFSIFRFLGLSDFLEMDQTWPDYTSYPTRIPETRSPFSALLIREILPVIKFEELTNSGEDLPENCAVCLYEFEGEQEIRWLRNCRHIFHRSCLDRWMDHDQKTCPLCRTPFVPDEMQEEFNQRLWAASGVHDFHCPVTELL.

A helical membrane pass occupies residues 15 to 37 (LFVQTLSILGFIRTIVFSIFRFL). The RING-type; atypical zinc finger occupies 94–137 (CAVCLYEFEGEQEIRWLRNCRHIFHRSCLDRWMDHDQKTCPLCR).

The protein belongs to the RING-type zinc finger family. In terms of tissue distribution, highly expressed in stems, rosette leaves and siliques, and moderately expressed in roots, cauline leaves and flower. Detected at low levels in seeds.

The protein resides in the membrane. Functionally, may be involved in the brassinosteroids (BRs) signaling pathway and regulate the growth and development of rosette leaves. Seems to prevent over development of leaves and inflorescence stems. In Arabidopsis thaliana (Mouse-ear cress), this protein is Brassinosteroid-responsive RING protein 1.